The following is a 490-amino-acid chain: Cheilanthifoline synthase (490 aa).

Residues 2–22 traverse the membrane as a helical segment; sequence EESLWVVTATVVVVFAIAKLL. Position 432 (cysteine 432) interacts with heme.

This sequence belongs to the cytochrome P450 family. The cofactor is heme. In terms of tissue distribution, expressed in roots. Detected in leaves and stems.

The protein localises to the endoplasmic reticulum membrane. The enzyme catalyses (S)-scoulerine + reduced [NADPH--hemoprotein reductase] + O2 = (S)-cheilanthifoline + oxidized [NADPH--hemoprotein reductase] + 2 H2O + H(+). Its pathway is alkaloid biosynthesis. Methylenedioxy bridge-forming cytochrome P450 involved in the biosynthesis of isoquinoline alkaloids. Converts (S)-scoulerine into (R,S)-cheilanthifoline. Catalyzes an oxidative reaction that does not incorporate oxygen into the product. The polypeptide is Cheilanthifoline synthase (CYP719A5) (Eschscholzia californica (California poppy)).